Consider the following 235-residue polypeptide: Golgi to ER traffic protein 1 (235 aa).

Residue Met-1 is a topological domain, lumenal. A helical transmembrane segment spans residues 2 to 21 (HWAAAVAIFFIVVTKFLQYT). The Cytoplasmic portion of the chain corresponds to 22–104 (NKYHEKWISK…AFQAHLHKLR (83 aa)). Residues 68–104 (WTKNNRKLDSLDKEINNLKDEIQSENKAFQAHLHKLR) adopt a coiled-coil conformation. A helical transmembrane segment spans residues 105-125 (LLALTVPFFVFKIMYGKTPVY). The Lumenal portion of the chain corresponds to 126-181 (KLSSSTSTLFPTFVSGVWSQGWLYVLLHPLRTISQKWHIMEGKFGASKFDDMALQS). Residues 182 to 198 (VSLGIWVWALMNVINGV) form a helical membrane-spanning segment. Residues 199-235 (EFIVKQLFLTPKMEAPASVETQEEKALDAVDDAIILD) are Cytoplasmic-facing.

Belongs to the WRB/GET1 family. In terms of assembly, component of the Golgi to ER traffic (GET) complex, which is composed of GET1, GET2 and GET3. Within the complex, GET1 and GET2 form a heterotetramer which is stabilized by phosphatidylinositol binding and which binds to the GET3 homodimer.

It is found in the endoplasmic reticulum membrane. The protein localises to the golgi apparatus membrane. Functionally, required for the post-translational delivery of tail-anchored (TA) proteins to the endoplasmic reticulum. Together with GET2, acts as a membrane receptor for soluble GET3, which recognizes and selectively binds the transmembrane domain of TA proteins in the cytosol. The GET complex cooperates with the HDEL receptor ERD2 to mediate the ATP-dependent retrieval of resident ER proteins that contain a C-terminal H-D-E-L retention signal from the Golgi to the ER. This chain is Golgi to ER traffic protein 1, found in Saccharomyces cerevisiae (strain RM11-1a) (Baker's yeast).